Consider the following 60-residue polypeptide: Cytotoxin 1 (60 aa).

4 cysteine pairs are disulfide-bonded: cysteine 3–cysteine 21, cysteine 14–cysteine 38, cysteine 42–cysteine 53, and cysteine 54–cysteine 59.

Belongs to the three-finger toxin family. Short-chain subfamily. Type IA cytotoxin sub-subfamily. Monomer, or heterodimer with alpha-cobratoxin (AC P01391); disulfide-linked. Expressed by the venom gland.

It localises to the secreted. The protein resides in the target cell membrane. Functionally, monomer: shows cytolytic activity (apoptosis is induced in C2C12 cells, but no cytotoxicity is observed on INS-1E). In addition, this toxin shows insulinotropic activity that may be mediated by the modulation of potassium channels (Kv). It induces the increase of intracellular calcium release. It induces insulin secretion from rat INS-1E cells in absence and in presence of glucose, without affecting cell viability and integrity. In presence of glucose, the insulinotropic activity is increased, suggesting a possible synergistic effect with glucose. Its insulinotropic activity does not involve GLP-1R signaling. Heterodimer: has no cytolytic activity, but retains most of the alpha-cobratoxin capacity to compete with alpha-bungarotoxin for binding to Torpedo and alpha-7/CHRNA7 nicotinic acetylcholine receptors (nAChRs) as well as to Lymnea stagnalis acetylcholine-binding protein. In Naja kaouthia (Monocled cobra), this protein is Cytotoxin 1.